The following is a 326-amino-acid chain: Elongation factor Ts (326 aa).

The interval 80-83 (TDFV) is involved in Mg(2+) ion dislocation from EF-Tu.

This sequence belongs to the EF-Ts family.

The protein localises to the cytoplasm. Functionally, associates with the EF-Tu.GDP complex and induces the exchange of GDP to GTP. It remains bound to the aminoacyl-tRNA.EF-Tu.GTP complex up to the GTP hydrolysis stage on the ribosome. The sequence is that of Elongation factor Ts from Rhodopirellula baltica (strain DSM 10527 / NCIMB 13988 / SH1).